Reading from the N-terminus, the 396-residue chain is Putative nickel insertion protein (396 aa).

It belongs to the LarC family.

The protein is Putative nickel insertion protein of Wolinella succinogenes (strain ATCC 29543 / DSM 1740 / CCUG 13145 / JCM 31913 / LMG 7466 / NCTC 11488 / FDC 602W) (Vibrio succinogenes).